A 452-amino-acid polypeptide reads, in one-letter code: Bifunctional protein GlmU (452 aa).

A pyrophosphorylase region spans residues 1–232 (MTARNSLTIV…EDEVRGINTK (232 aa)). Residues 11–14 (LAAG), lysine 25, glutamine 78, and 83–84 (GT) each bind UDP-N-acetyl-alpha-D-glucosamine. Aspartate 108 contributes to the Mg(2+) binding site. Positions 144, 158, 173, and 230 each coordinate UDP-N-acetyl-alpha-D-glucosamine. Residue asparagine 230 participates in Mg(2+) binding. The linker stretch occupies residues 233 to 253 (AQLAEAETVMQTRLRLAAMAA). An N-acetyltransferase region spans residues 254-452 (GVTLIAPETV…KSRHRKPKAH (199 aa)). Residues arginine 319 and lysine 337 each contribute to the UDP-N-acetyl-alpha-D-glucosamine site. The active-site Proton acceptor is histidine 349. Tyrosine 352 and asparagine 363 together coordinate UDP-N-acetyl-alpha-D-glucosamine. Residues alanine 366, 372–373 (NY), serine 391, serine 409, and arginine 426 each bind acetyl-CoA.

In the N-terminal section; belongs to the N-acetylglucosamine-1-phosphate uridyltransferase family. The protein in the C-terminal section; belongs to the transferase hexapeptide repeat family. Homotrimer. The cofactor is Mg(2+).

It localises to the cytoplasm. The enzyme catalyses alpha-D-glucosamine 1-phosphate + acetyl-CoA = N-acetyl-alpha-D-glucosamine 1-phosphate + CoA + H(+). The catalysed reaction is N-acetyl-alpha-D-glucosamine 1-phosphate + UTP + H(+) = UDP-N-acetyl-alpha-D-glucosamine + diphosphate. Its pathway is nucleotide-sugar biosynthesis; UDP-N-acetyl-alpha-D-glucosamine biosynthesis; N-acetyl-alpha-D-glucosamine 1-phosphate from alpha-D-glucosamine 6-phosphate (route II): step 2/2. It functions in the pathway nucleotide-sugar biosynthesis; UDP-N-acetyl-alpha-D-glucosamine biosynthesis; UDP-N-acetyl-alpha-D-glucosamine from N-acetyl-alpha-D-glucosamine 1-phosphate: step 1/1. It participates in bacterial outer membrane biogenesis; LPS lipid A biosynthesis. In terms of biological role, catalyzes the last two sequential reactions in the de novo biosynthetic pathway for UDP-N-acetylglucosamine (UDP-GlcNAc). The C-terminal domain catalyzes the transfer of acetyl group from acetyl coenzyme A to glucosamine-1-phosphate (GlcN-1-P) to produce N-acetylglucosamine-1-phosphate (GlcNAc-1-P), which is converted into UDP-GlcNAc by the transfer of uridine 5-monophosphate (from uridine 5-triphosphate), a reaction catalyzed by the N-terminal domain. This is Bifunctional protein GlmU from Rhodopseudomonas palustris (strain ATCC BAA-98 / CGA009).